A 120-amino-acid chain; its full sequence is Large ribosomal subunit protein bL12 (120 aa).

This sequence belongs to the bacterial ribosomal protein bL12 family. In terms of assembly, homodimer. Part of the ribosomal stalk of the 50S ribosomal subunit. Forms a multimeric L10(L12)X complex, where L10 forms an elongated spine to which 2 to 4 L12 dimers bind in a sequential fashion. Binds GTP-bound translation factors.

Its function is as follows. Forms part of the ribosomal stalk which helps the ribosome interact with GTP-bound translation factors. Is thus essential for accurate translation. The polypeptide is Large ribosomal subunit protein bL12 (Listeria monocytogenes serotype 4b (strain CLIP80459)).